Consider the following 254-residue polypeptide: Alcohol dehydrogenase 2 (254 aa).

Residue phenylalanine 10 to leucine 33 coordinates NAD(+). A substrate-binding site is contributed by serine 138. Residue tyrosine 151 is the Proton acceptor of the active site.

This sequence belongs to the short-chain dehydrogenases/reductases (SDR) family. As to quaternary structure, homodimer.

It carries out the reaction a primary alcohol + NAD(+) = an aldehyde + NADH + H(+). The catalysed reaction is a secondary alcohol + NAD(+) = a ketone + NADH + H(+). The chain is Alcohol dehydrogenase 2 (Adh2) from Drosophila mojavensis (Fruit fly).